The sequence spans 198 residues: Cerebellin-4 (198 aa).

Positions 1–24 (MGSARRALSVVPAVLLILVLPVWA) are cleaved as a signal peptide. N-linked (GlcNAc...) asparagine glycans are attached at residues Asn26 and Asn85. The region spanning 63–198 (AANSKVAFSA…TFSGFLVFPL (136 aa)) is the C1q domain.

Homohexamer; disulfide-linked homotrimers. The trimers are assembled via the globular C1q domains. The trimers associate via N-terminal cysteine residues to form disulfide-linked hexamers. May form oligomers with CBLN1, CBLN2 and CBLN3 prior to secretion. Once secreted, does not interact with other CBLN family members. Strongly interacts with DCC in a NTN1-displaceable fashion. Weakly binds to NRXN1 and NRXN2 long and short isoforms produced by alternative promoter usage. Interaction with NRXN3 short isoform is hardly detectable; no interaction at all with NRXN3 long isoform. Does not interact with NEO1, GRID1 and GRID2. In terms of processing, sialoglycoprotein. In terms of tissue distribution, expressed in brain with high levels in particular thalamic nuclei. In the thalamus, predominantly expressed in neurons within the parafascicular nucleus. Found in the hippocampus, mostly in the dendrites and somata of pyramidal neurons (at protein level). Very low or no expression in most other brain regions. Highly expressed in the ventral medial habenula.

It localises to the secreted. Its subcellular location is the synapse. In terms of biological role, acts as a synaptic organizer in specific subsets of neurons in the brain. Essential for the formation and maintenance of inhibitory GABAergic synapses. Promotes the development of dendrite-targeting inhibitory GABAergic synapses made by somatostatin-positive interneurons. May contribute to the function of ventral medial habenula region of the brain implicated in the regulation of anxiety-related behaviors. May play a role in CBLN3 export from the endoplasmic reticulum and secretion. The sequence is that of Cerebellin-4 (Cbln4) from Mus musculus (Mouse).